We begin with the raw amino-acid sequence, 57 residues long: uncharacterized protein (57 aa).

This is an uncharacterized protein from Saccharomyces cerevisiae (strain ATCC 204508 / S288c) (Baker's yeast).